Reading from the N-terminus, the 280-residue chain is Phosphatidylglycerol--prolipoprotein diacylglyceryl transferase (280 aa).

A run of 4 helical transmembrane segments spans residues 30–50, 71–91, 106–126, and 132–152; these read WYGL…RRII, FLLW…ILFY, IWNG…AIII, and AIPL…GLFF. R154 contributes to the a 1,2-diacyl-sn-glycero-3-phospho-(1'-sn-glycerol) binding site. Transmembrane regions (helical) follow at residues 188-208, 217-237, and 251-271; these read QLYE…WFVY, GLVT…VEFF, and WLTM…WAIA.

This sequence belongs to the Lgt family.

The protein resides in the cell inner membrane. The catalysed reaction is L-cysteinyl-[prolipoprotein] + a 1,2-diacyl-sn-glycero-3-phospho-(1'-sn-glycerol) = an S-1,2-diacyl-sn-glyceryl-L-cysteinyl-[prolipoprotein] + sn-glycerol 1-phosphate + H(+). It participates in protein modification; lipoprotein biosynthesis (diacylglyceryl transfer). In terms of biological role, catalyzes the transfer of the diacylglyceryl group from phosphatidylglycerol to the sulfhydryl group of the N-terminal cysteine of a prolipoprotein, the first step in the formation of mature lipoproteins. This chain is Phosphatidylglycerol--prolipoprotein diacylglyceryl transferase, found in Rhizobium meliloti (strain 1021) (Ensifer meliloti).